The primary structure comprises 70 residues: ATP synthase subunit c (70 aa).

2 helical membrane passes run 5–25 and 47–67; these read AAGIAAGLAAVGGAIAVAIIV and FIGVPLAEAVPIIAIVVSFIL.

This sequence belongs to the ATPase C chain family. As to quaternary structure, F-type ATPases have 2 components, F(1) - the catalytic core - and F(0) - the membrane proton channel. F(1) has five subunits: alpha(3), beta(3), gamma(1), delta(1), epsilon(1). F(0) has three main subunits: a(1), b(2) and c(10-14). The alpha and beta chains form an alternating ring which encloses part of the gamma chain. F(1) is attached to F(0) by a central stalk formed by the gamma and epsilon chains, while a peripheral stalk is formed by the delta and b chains.

The protein resides in the cell membrane. In terms of biological role, f(1)F(0) ATP synthase produces ATP from ADP in the presence of a proton or sodium gradient. F-type ATPases consist of two structural domains, F(1) containing the extramembraneous catalytic core and F(0) containing the membrane proton channel, linked together by a central stalk and a peripheral stalk. During catalysis, ATP synthesis in the catalytic domain of F(1) is coupled via a rotary mechanism of the central stalk subunits to proton translocation. Its function is as follows. Key component of the F(0) channel; it plays a direct role in translocation across the membrane. A homomeric c-ring of between 10-14 subunits forms the central stalk rotor element with the F(1) delta and epsilon subunits. In Halalkalibacterium halodurans (strain ATCC BAA-125 / DSM 18197 / FERM 7344 / JCM 9153 / C-125) (Bacillus halodurans), this protein is ATP synthase subunit c.